The primary structure comprises 692 residues: MTREFSLENTRNIGIMAHIDAGKTTATERILYYTGRIHKIGETHEGASQMDWMEQEQERGITITSAATTAQWKGHRVNIIDTPGHVDFTVEVERSLRVLDGAVAVLDAQSGVEPQTETVWRQATTYGVPRIVFVNKMDKIGADFLYSVGTIHDRLQANAHPIQLPIGAEDEFNGIIDLVEECAYMYSNDLGTDIERVEIPEEHKELAEEYRGKLIEAVAELDEEMMMKYLEGEEITVEELKAGIRKATTSVEFFPVICGSAFKNKGVQILLDAVIDYLPSPLDVPAIKGTLPDTEEAIERKSSDEEPFAALAFKIMTDPYVGKLTFFRVYSGVLNSGSYVKNSTKGKRERVGRILQMHANSREEISTVYAGDIAAAVGLKDTTTGDTLCDEKSLVILESMEFPEPVISVAIEPKSKADQDKMGTALSKLSEEDPTFRAHTDQETGQTIIAGMGELHLDIIVDRMRREFKVEANVGAPQVAYRETFRAAAKVEGKFARQSGGRGQFGHVWIEFEPNEEGKGFEFQNKVVGGVVPREYIPAVGAGLEDALKNGVLAGYPLVDIKAALVDGSYHDVDSSEMAFKIAASMALKAAVSKCSPVILEPMMKVEVVIPEEYMGDIMGDVTSRRGRVEGMEARGNAQVVRAMVPLSEMFGYATALRSNTQGRGTFSMTFDHYEEVPKSVSEEIIKKNKGE.

Residues 8 to 282 (ENTRNIGIMA…AVIDYLPSPL (275 aa)) enclose the tr-type G domain. Residues 17–24 (AHIDAGKT), 81–85 (DTPGH), and 135–138 (NKMD) each bind GTP.

It belongs to the TRAFAC class translation factor GTPase superfamily. Classic translation factor GTPase family. EF-G/EF-2 subfamily.

It is found in the cytoplasm. Catalyzes the GTP-dependent ribosomal translocation step during translation elongation. During this step, the ribosome changes from the pre-translocational (PRE) to the post-translocational (POST) state as the newly formed A-site-bound peptidyl-tRNA and P-site-bound deacylated tRNA move to the P and E sites, respectively. Catalyzes the coordinated movement of the two tRNA molecules, the mRNA and conformational changes in the ribosome. The polypeptide is Elongation factor G (Bacillus mycoides (strain KBAB4) (Bacillus weihenstephanensis)).